Consider the following 687-residue polypeptide: Translation initiation factor IF-2 (687 aa).

The tr-type G domain maps to 186 to 355; the sequence is KRPPIVTVMG…LLTAEMLELK (170 aa). The G1 stretch occupies residues 195 to 202; sequence GHVDHGKT. 195–202 serves as a coordination point for GTP; sequence GHVDHGKT. Residues 220-224 form a G2 region; that stretch reads GITQH. The segment at 241–244 is G3; that stretch reads DTPG. Residues 241–245 and 295–298 contribute to the GTP site; these read DTPGH and NKID. Residues 295–298 are G4; sequence NKID. Residues 331-333 are G5; sequence SAK.

The protein belongs to the TRAFAC class translation factor GTPase superfamily. Classic translation factor GTPase family. IF-2 subfamily.

It is found in the cytoplasm. Its function is as follows. One of the essential components for the initiation of protein synthesis. Protects formylmethionyl-tRNA from spontaneous hydrolysis and promotes its binding to the 30S ribosomal subunits. Also involved in the hydrolysis of GTP during the formation of the 70S ribosomal complex. In Clostridium botulinum (strain Eklund 17B / Type B), this protein is Translation initiation factor IF-2.